Reading from the N-terminus, the 501-residue chain is ATP synthase subunit alpha (501 aa).

An ATP-binding site is contributed by 169-176; sequence GDRQTGKT.

This sequence belongs to the ATPase alpha/beta chains family. In terms of assembly, F-type ATPases have 2 components, CF(1) - the catalytic core - and CF(0) - the membrane proton channel. CF(1) has five subunits: alpha(3), beta(3), gamma(1), delta(1), epsilon(1). CF(0) has three main subunits: a(1), b(2) and c(9-12). The alpha and beta chains form an alternating ring which encloses part of the gamma chain. CF(1) is attached to CF(0) by a central stalk formed by the gamma and epsilon chains, while a peripheral stalk is formed by the delta and b chains.

The protein localises to the cell membrane. It carries out the reaction ATP + H2O + 4 H(+)(in) = ADP + phosphate + 5 H(+)(out). Produces ATP from ADP in the presence of a proton gradient across the membrane. The alpha chain is a regulatory subunit. This chain is ATP synthase subunit alpha, found in Streptococcus pneumoniae serotype 4 (strain ATCC BAA-334 / TIGR4).